Consider the following 161-residue polypeptide: MSSFVTNGYLPVTLEPHELTLDIKTNIRNAVYKTYLHKEISGKMAKKIEICKDVELPLGEIVNNSVVINVPCVITYAYYHVGDIVRGTLNIEDESNVTIQCGDLICKLSRDSGTVSFSDSKYCFFRNGNAYDNGSEVSAVLMEAQQGTESSFVFLANIVDS.

This sequence belongs to the poxviridae DNA-directed RNA polymerase 18 kDa subunit family. The DNA-dependent RNA polymerase used for intermediate and late genes expression consists of eight subunits Rpo30/OPG66, Rpo7/OPG90, Rpo22/OPG103, Rpo147/OPG105, Rpo18/OPG119, Rpo19/OPG131, Rpo132/OPG151 and Rpo35/OPG156. The same holoenzyme, with the addition of the transcription-specificity factor OPG109, is used for early gene expression.

The protein resides in the virion. It carries out the reaction RNA(n) + a ribonucleoside 5'-triphosphate = RNA(n+1) + diphosphate. Functionally, part of the DNA-dependent RNA polymerase which catalyzes the transcription of viral DNA into RNA using the four ribonucleoside triphosphates as substrates. Responsible for the transcription of early, intermediate and late genes. DNA-dependent RNA polymerase associates with the early transcription factor (ETF), itself composed of OPG118 and OPG133, thereby allowing the early genes transcription. Late transcription, and probably also intermediate transcription, require newly synthesized RNA polymerase. The protein is DNA-directed RNA polymerase 18 kDa subunit (OPG119) of Homo sapiens (Human).